The sequence spans 647 residues: Sialidase (647 aa).

Positions 1-37 (MTANPYLRRLPRRRAVSFLLAPALAAATVAGASPAQA) are cleaved as a signal peptide. Arg68 provides a ligand contact to substrate. The active-site Proton acceptor is the Asp92. BNR repeat units lie at residues 102-113 (RRSTDGGRTWGE), 175-186 (ATSTDGGLTWSH), and 239-250 (VYSDDHGRTWRA). The active-site Nucleophile is the Glu260. Residue Arg276 participates in substrate binding. BNR repeat units lie at residues 287-298 (AVSTDGGHSYGP) and 348-359 (RMSCDDGQTWPV). Tyr370 (nucleophile) is an active-site residue. The F5/8 type C domain maps to 496 to 646 (TFTVTVGLLD…AVAELEVEGQ (151 aa)).

This sequence belongs to the glycosyl hydrolase 33 family.

Its subcellular location is the secreted. It catalyses the reaction Hydrolysis of alpha-(2-&gt;3)-, alpha-(2-&gt;6)-, alpha-(2-&gt;8)- glycosidic linkages of terminal sialic acid residues in oligosaccharides, glycoproteins, glycolipids, colominic acid and synthetic substrates.. To release sialic acids for use as carbon and energy sources for this non-pathogenic bacterium while in pathogenic microorganisms, sialidases have been suggested to be pathogenic factors. The sequence is that of Sialidase (nedA) from Micromonospora viridifaciens.